We begin with the raw amino-acid sequence, 76 residues long: Omega-conotoxin-like TxO5 (76 aa).

An N-terminal signal peptide occupies residues 1–22 (MKLTCMVIVAVLFLTAWTFVTA). Positions 23-50 (ITSNGLENLFPNAHHEMKNPEASKLNKR) are excised as a propeptide. Intrachain disulfides connect Cys-51-Cys-66, Cys-58-Cys-70, and Cys-65-Cys-75.

Belongs to the conotoxin O1 superfamily. In terms of tissue distribution, expressed by the venom duct.

The protein resides in the secreted. Functionally, omega-conotoxins act at presynaptic membranes, they bind and block voltage-gated calcium channels (Cav). The sequence is that of Omega-conotoxin-like TxO5 (TXO5) from Conus textile (Cloth-of-gold cone).